The following is a 341-amino-acid chain: Anthranilate phosphoribosyltransferase (341 aa).

5-phospho-alpha-D-ribose 1-diphosphate contacts are provided by residues glycine 80, 83–84 (GD), threonine 88, 90–93 (NIST), 108–116 (KHGNYSVSS), and serine 120. Glycine 80 is a binding site for anthranilate. Serine 92 is a Mg(2+) binding site. Asparagine 111 is a binding site for anthranilate. Arginine 166 is a binding site for anthranilate. Mg(2+)-binding residues include aspartate 224 and glutamate 225.

The protein belongs to the anthranilate phosphoribosyltransferase family. As to quaternary structure, homodimer. Requires Mg(2+) as cofactor.

The enzyme catalyses N-(5-phospho-beta-D-ribosyl)anthranilate + diphosphate = 5-phospho-alpha-D-ribose 1-diphosphate + anthranilate. The protein operates within amino-acid biosynthesis; L-tryptophan biosynthesis; L-tryptophan from chorismate: step 2/5. Its function is as follows. Catalyzes the transfer of the phosphoribosyl group of 5-phosphorylribose-1-pyrophosphate (PRPP) to anthranilate to yield N-(5'-phosphoribosyl)-anthranilate (PRA). This chain is Anthranilate phosphoribosyltransferase, found in Haloquadratum walsbyi (strain DSM 16790 / HBSQ001).